Reading from the N-terminus, the 380-residue chain is Zinc metalloproteinase-like protein nas-21 (380 aa).

Positions 1–24 (MNYFITFFFMHIAVLNFYFRFSNG) are cleaved as a signal peptide. The region spanning 46-234 (QALRMDNEPR…LMINEYYQCS (189 aa)) is the Peptidase M12A domain. Asn87 carries an N-linked (GlcNAc...) asparagine glycan. 2 disulfides stabilise this stretch: Cys90–Cys233 and Cys110–Cys130. Glu138 is an active-site residue. Asn253, Asn269, Asn283, and Asn304 each carry an N-linked (GlcNAc...) asparagine glycan.

It is found in the secreted. Functionally, may lack metalloprotease activity. This Caenorhabditis elegans protein is Zinc metalloproteinase-like protein nas-21 (nas-21).